The chain runs to 628 residues: uncharacterized protein (628 aa).

It belongs to the ATP-dependent AMP-binding enzyme family.

This is an uncharacterized protein from Pseudomonas aeruginosa (strain ATCC 15692 / DSM 22644 / CIP 104116 / JCM 14847 / LMG 12228 / 1C / PRS 101 / PAO1).